The following is a 121-amino-acid chain: Large ribosomal subunit protein uL14c (121 aa).

The protein belongs to the universal ribosomal protein uL14 family. Part of the 50S ribosomal subunit.

It is found in the plastid. Its subcellular location is the chloroplast. Binds to 23S rRNA. The protein is Large ribosomal subunit protein uL14c of Pelargonium hortorum (Common geranium).